The chain runs to 300 residues: Meiosis-specific cyclin crs1 (300 aa).

The 123-residue stretch at 61-183 folds into the Cyclin N-terminal domain; that stretch reads IIEQEKKGLT…VLALLNFDIY (123 aa).

It belongs to the cyclin family. Cyclin AB subfamily.

The protein localises to the cytoplasm. It is found in the nucleus. Has a role in meiotic chromosome segregation. The chain is Meiosis-specific cyclin crs1 (crs1) from Schizosaccharomyces pombe (strain 972 / ATCC 24843) (Fission yeast).